The following is a 105-amino-acid chain: Replication initiation control protein YabA (105 aa).

Positions 79, 81, 95, and 98 each coordinate Zn(2+).

It belongs to the YabA family. Homotetramer. Interacts with both DnaA and DnaN, acting as a bridge between these two proteins. Requires Zn(2+) as cofactor.

Its subcellular location is the cytoplasm. It localises to the nucleoid. Its function is as follows. Involved in control of chromosome replication initiation. Inhibits the cooperative binding of DnaA to the oriC region, thus negatively regulating initiation of chromosome replication. Inhibits the ability of DnaA-ATP to form a helix on DNA; does not disassemble preformed DnaA-DNA helices. Decreases the residence time of DnaA on the chromosome at its binding sites (oriC, replication forks and promoter-binding sites). Tethers DnaA to the replication machinery via the DNA polymerase beta sliding clamp subunit (dnaN). Associates with oriC and other DnaA targets on the chromosome in a DnaA-dependent manner. The protein is Replication initiation control protein YabA of Streptococcus pneumoniae serotype 2 (strain D39 / NCTC 7466).